We begin with the raw amino-acid sequence, 298 residues long: MDSPFKPDVVRGQVALITGGGSGIGFEISSQFGKHGASIAIMGRRKQVLDDAVSALRSLGIQAIGLEGDVRKQEDARRVVEATFQHFGKLDILVNAAAGNFLAAAEDLSPNGFRTVLDIDAVGTFNMCHAALKYLKKGAPGRDSSSGGGSIINISATLHYTASWYQIHVSAAKAAVDATTRNLALEWGTDYDIRVNGIAPGPIGGTPGMSKLVPEEIENKTREYMPLYKVGEKWDIAMAALYLSCDSGKYVSGLTMVVDGGLWLSKPRHLPKEAVKQLSRAVEKRSRAKPVGLPTSKL.

19-24 (GGGSGI) is a binding site for NADP(+). Residue R44 coordinates substrate. Position 69 (D69) interacts with NADP(+). Substrate is bound by residues R71, F101, and 109–111 (SPN). NADP(+) is bound by residues K173 and 200–206 (PGPIGGT). The interval 279 to 298 (SRAVEKRSRAKPVGLPTSKL) is disordered. The short motif at 296 to 298 (SKL) is the Microbody targeting signal element.

This sequence belongs to the short-chain dehydrogenases/reductases (SDR) family. 2,4-dienoyl-CoA reductase subfamily.

Its subcellular location is the peroxisome. It catalyses the reaction a (2E,4Z)-dienoyl-CoA + NADPH + H(+) = a 4,5-saturated-(3E)-enoyl-CoA + NADP(+). The catalysed reaction is a (2E,4E)-dienoyl-CoA + NADPH + H(+) = a 4,5-saturated-(3E)-enoyl-CoA + NADP(+). Its function is as follows. Auxiliary enzyme of beta-oxidation. Participates in the degradation of unsaturated fatty enoyl-CoA esters having double bonds in both even- and odd-numbered positions in peroxisome. Catalyzes the NADP-dependent reduction of 2,4-dienoyl-CoA to yield trans-3-enoyl-CoA. The chain is Peroxisomal 2,4-dienoyl-CoA reductase [(3E)-enoyl-CoA-producing] from Arabidopsis thaliana (Mouse-ear cress).